A 262-amino-acid polypeptide reads, in one-letter code: R3H domain-containing protein 4 (262 aa).

Disordered stretches follow at residues 1–27 (MVAL…PGCL) and 132–155 (YLED…RRED). The segment covering 146–155 (GRGEDRRRED) has biased composition (basic and acidic residues). An R3H domain is found at 182 to 245 (METLESWEER…RRQMKVSNRH (64 aa)).

Its subcellular location is the nucleus. This Mus musculus (Mouse) protein is R3H domain-containing protein 4 (R3hdm4).